Consider the following 202-residue polypeptide: Putative 3-methyladenine DNA glycosylase (202 aa).

It belongs to the DNA glycosylase MPG family.

This chain is Putative 3-methyladenine DNA glycosylase, found in Staphylococcus aureus (strain Mu3 / ATCC 700698).